A 381-amino-acid chain; its full sequence is Cytochrome P450 105C1 (381 aa).

Position 330 (C330) interacts with heme.

This sequence belongs to the cytochrome P450 family. Requires heme as cofactor.

The protein localises to the cytoplasm. This chain is Cytochrome P450 105C1 (cyp105C1), found in Streptomyces sp.